Consider the following 411-residue polypeptide: tRNA (uracil(54)-C(5))-methyltransferase (411 aa).

[4Fe-4S] cluster-binding residues include Cys-62, Cys-68, Cys-71, and Cys-138. Residues Gln-254, Tyr-280, Thr-285, Asp-301 to Ser-302, Asp-328, and Asp-342 contribute to the S-adenosyl-L-methionine site. Catalysis depends on Cys-369, which acts as the Nucleophile. The active-site Proton acceptor is the Glu-402.

Belongs to the class I-like SAM-binding methyltransferase superfamily. RNA M5U methyltransferase family.

It carries out the reaction uridine(54) in tRNA + S-adenosyl-L-methionine = 5-methyluridine(54) in tRNA + S-adenosyl-L-homocysteine + H(+). Catalyzes the formation of 5-methyl-uridine at position 54 (m5U54) in tRNA. This Pyrococcus furiosus (strain ATCC 43587 / DSM 3638 / JCM 8422 / Vc1) protein is tRNA (uracil(54)-C(5))-methyltransferase.